Reading from the N-terminus, the 764-residue chain is Chloride anion exchanger (764 aa).

At M1 to D76 the chain is on the cytoplasmic side. The chain crosses the membrane as a helical span at residues I77–L97. Residues V98–D99 lie on the Extracellular side of the membrane. The chain crosses the membrane as a helical span at residues I100–G120. Over T121–H124 the chain is Cytoplasmic. A helical membrane pass occupies residues I125–V145. Over S146–R175 the chain is Extracellular. N-linked (GlcNAc...) asparagine glycans are attached at residues N153, N161, and N165. A helical membrane pass occupies residues V176 to L196. Position 197 (R197) is a topological domain, cytoplasmic. Residues I198–A218 form a helical membrane-spanning segment. The Extracellular portion of the chain corresponds to V219–T257. A helical transmembrane segment spans residues N258–I278. The Cytoplasmic portion of the chain corresponds to N279–D342. A helical transmembrane segment spans residues C343–L363. Residues K364–E374 are Extracellular-facing. The chain crosses the membrane as a helical span at residues L375–T395. At A396–Q411 the chain is on the cytoplasmic side. A helical membrane pass occupies residues I412–L432. The Extracellular portion of the chain corresponds to A433 to C469. The chain crosses the membrane as a helical span at residues L470–A490. Residues S491–D701 are Cytoplasmic-facing. The 196-residue stretch at D525–I720 folds into the STAS domain. The PDZ-binding motif lies at E761 to F764.

Belongs to the SLC26A/SulP transporter (TC 2.A.53) family. As to quaternary structure, interacts with CFTR, SLC26A6 and NHERF1. Interacts with PDZK1. Interacts (via PDZ-binding motif) with NHERF4 (via the third PDZ domain); interaction leads to decreased expression of SLC26A3 on the cell membrane resulting in its reduced exchanger activity. N-glycosylation is required for efficient cell surface expression, and protection from proteolytic degradation. In terms of tissue distribution, expressed in the colon. Expression is significantly decreased in adenomas (polyps) and adenocarcinomas of the colon.

The protein localises to the apical cell membrane. It localises to the membrane. It is found in the cell membrane. The enzyme catalyses hydrogencarbonate(in) + 2 chloride(out) = hydrogencarbonate(out) + 2 chloride(in). Inhibited by acidic pH. Functionally, mediates chloride-bicarbonate exchange with a chloride bicarbonate stoichiometry of 2:1 in the intestinal epithelia. Plays a role in the chloride and bicarbonate homeostasis during sperm epididymal maturation and capacitation. The polypeptide is Chloride anion exchanger (SLC26A3) (Homo sapiens (Human)).